Here is a 438-residue protein sequence, read N- to C-terminus: Arginine deiminase-like protein (438 aa).

It belongs to the arginine deiminase family.

This chain is Arginine deiminase-like protein, found in Mycoplasma pneumoniae (strain ATCC 29342 / M129 / Subtype 1) (Mycoplasmoides pneumoniae).